The chain runs to 191 residues: Protein Ves (191 aa).

Belongs to the Ves family.

The chain is Protein Ves from Escherichia coli O127:H6 (strain E2348/69 / EPEC).